The following is a 199-amino-acid chain: Thymidylate kinase (199 aa).

7 to 14 (GIDGSGKS) contacts ATP.

It belongs to the thymidylate kinase family.

It carries out the reaction dTMP + ATP = dTDP + ADP. Phosphorylation of dTMP to form dTDP in both de novo and salvage pathways of dTTP synthesis. This is Thymidylate kinase from Neorickettsia sennetsu (strain ATCC VR-367 / Miyayama) (Ehrlichia sennetsu).